The following is a 132-amino-acid chain: Intraflagellar transport protein 20 homolog (132 aa).

Residues 70–132 (MKAIGARNLL…EFIDQFIFQK (63 aa)) form an IFT57-binding region. A coiled-coil region spans residues 74 to 116 (GARNLLKSIAKQREAQQQQLQALIAEKKTQLERYRVEYEALCK).

Component of the IFT complex B, at least composed of IFT20, IFT22, IFT25, IFT27, IFT46, IFT52, TRAF3IP1/IFT54, IFT57, IFT74, IFT80, IFT81, and IFT88. Interacts directly with IFT57 and KIF3B/Kinesin II subunit. Interacts with IFT88. Interacts with CEP83. Interacts with SPEF2 (via C-terminus). Interacts with CBL and CBLB. Interacts with TRIP11. Interacts with TTC21A. Interacts with SPATA1. Interacts with USH1G. Interacts with CCDC146. Interacts with CEP78; regulating IFT20 stability and localization. As to expression, expressed predominantly in the testis (at protein level). Expressed in kidney and retina. Expression is up-regulated during spermiogenesis.

The protein localises to the golgi apparatus. It localises to the cis-Golgi network. It is found in the cytoplasm. Its subcellular location is the cytoskeleton. The protein resides in the microtubule organizing center. The protein localises to the centrosome. It localises to the centriole. It is found in the cilium basal body. Its subcellular location is the cell projection. The protein resides in the cilium. The protein localises to the cytoplasmic vesicle. It localises to the secretory vesicle. It is found in the acrosome. Functionally, part of intraflagellar transport (IFT) particles involved in ciliary process assembly. May play a role in the trafficking of ciliary membrane proteins from the Golgi complex to the cilium. Regulates the ciliary platelet-derived growth factor receptor-alpha (PDGFRA) signaling pathway. Required for protein stability of E3 ubiquitin ligases CBL and CBLB that mediate ubiquitination and internalization of PDGFRA for proper feedback inhibition of PDGFRA signaling. Essential for male fertility. Plays an important role in spermatogenesis, particularly spermiogenesis, when germ cells form flagella. May play a role in the transport of flagellar proteins ODF2 and SPAG16 to build sperm flagella and in the removal of redundant sperm cytoplasm. Also involved in autophagy since it is required for trafficking of ATG16L and the expansion of the autophagic compartment. The polypeptide is Intraflagellar transport protein 20 homolog (Ift20) (Mus musculus (Mouse)).